Reading from the N-terminus, the 490-residue chain is Trigger factor (490 aa).

Residues 161-247 enclose the PPIase FKBP-type domain; that stretch reads GDQVIVDIEA…VHEVKEAELP (87 aa). The span at 441-460 shows a compositional bias: low complexity; sequence AEPAEGTEPAAEEAVTAPEV. A disordered region spans residues 441–490; sequence AEPAEGTEPAAEEAVTAPEVVDGETTPASESAESLAVTETGSRADDDQAS. The span at 466–481 shows a compositional bias: polar residues; that stretch reads TPASESAESLAVTETG.

It belongs to the FKBP-type PPIase family. Tig subfamily.

Its subcellular location is the cytoplasm. It carries out the reaction [protein]-peptidylproline (omega=180) = [protein]-peptidylproline (omega=0). Involved in protein export. Acts as a chaperone by maintaining the newly synthesized protein in an open conformation. Functions as a peptidyl-prolyl cis-trans isomerase. This Thermomicrobium roseum (strain ATCC 27502 / DSM 5159 / P-2) protein is Trigger factor.